Reading from the N-terminus, the 221-residue chain is uncharacterized protein (221 aa).

Residues 1-16 show a composition bias toward basic and acidic residues; it reads MESSRWDKDPPGERRP. Positions 1–64 are disordered; sequence MESSRWDKDP…SHTPQTNTRR (64 aa).

This is an uncharacterized protein from Homo sapiens (Human).